The chain runs to 512 residues: UDP-N-acetylmuramate--L-alanine ligase (512 aa).

132-138 (GAHGKTT) provides a ligand contact to ATP.

This sequence belongs to the MurCDEF family.

The protein localises to the cytoplasm. The catalysed reaction is UDP-N-acetyl-alpha-D-muramate + L-alanine + ATP = UDP-N-acetyl-alpha-D-muramoyl-L-alanine + ADP + phosphate + H(+). It functions in the pathway cell wall biogenesis; peptidoglycan biosynthesis. Cell wall formation. The polypeptide is UDP-N-acetylmuramate--L-alanine ligase (Bifidobacterium longum subsp. infantis (strain ATCC 15697 / DSM 20088 / JCM 1222 / NCTC 11817 / S12)).